The chain runs to 122 residues: Large ribosomal subunit protein uL14 (122 aa).

It belongs to the universal ribosomal protein uL14 family. As to quaternary structure, part of the 50S ribosomal subunit. Forms a cluster with proteins L3 and L19. In the 70S ribosome, L14 and L19 interact and together make contacts with the 16S rRNA in bridges B5 and B8.

Functionally, binds to 23S rRNA. Forms part of two intersubunit bridges in the 70S ribosome. The polypeptide is Large ribosomal subunit protein uL14 (Herminiimonas arsenicoxydans).